Here is a 471-residue protein sequence, read N- to C-terminus: Ribulose bisphosphate carboxylase large chain (471 aa).

Residues asparagine 115 and threonine 165 each contribute to the substrate site. Lysine 167 functions as the Proton acceptor in the catalytic mechanism. Lysine 169 serves as a coordination point for substrate. 3 residues coordinate Mg(2+): lysine 193, aspartate 195, and glutamate 196. An N6-carboxylysine modification is found at lysine 193. Histidine 286 functions as the Proton acceptor in the catalytic mechanism. Residues arginine 287, histidine 319, and serine 371 each contribute to the substrate site.

The protein belongs to the RuBisCO large chain family. Type I subfamily. In terms of assembly, heterohexadecamer of 8 large chains and 8 small chains. It depends on Mg(2+) as a cofactor.

It is found in the carboxysome. The catalysed reaction is 2 (2R)-3-phosphoglycerate + 2 H(+) = D-ribulose 1,5-bisphosphate + CO2 + H2O. It catalyses the reaction D-ribulose 1,5-bisphosphate + O2 = 2-phosphoglycolate + (2R)-3-phosphoglycerate + 2 H(+). Its function is as follows. RuBisCO catalyzes two reactions: the carboxylation of D-ribulose 1,5-bisphosphate, the primary event in carbon dioxide fixation, as well as the oxidative fragmentation of the pentose substrate in the photorespiration process. Both reactions occur simultaneously and in competition at the same active site. This is Ribulose bisphosphate carboxylase large chain from Prochlorococcus marinus (strain MIT 9301).